The primary structure comprises 258 residues: Ribosomal RNA small subunit methyltransferase J (258 aa).

Residues 104 to 105 (RD), 120 to 121 (ER), and Asp-175 contribute to the S-adenosyl-L-methionine site.

Belongs to the methyltransferase superfamily. RsmJ family.

Its subcellular location is the cytoplasm. The catalysed reaction is guanosine(1516) in 16S rRNA + S-adenosyl-L-methionine = N(2)-methylguanosine(1516) in 16S rRNA + S-adenosyl-L-homocysteine + H(+). Specifically methylates the guanosine in position 1516 of 16S rRNA. This chain is Ribosomal RNA small subunit methyltransferase J, found in Chromobacterium violaceum (strain ATCC 12472 / DSM 30191 / JCM 1249 / CCUG 213 / NBRC 12614 / NCIMB 9131 / NCTC 9757 / MK).